A 201-amino-acid polypeptide reads, in one-letter code: Small ribosomal subunit protein uS4 (201 aa).

Residues 26 to 48 (LSKKNYPPGQHGNSRKRKTSEYG) form a disordered region. Residues 92 to 155 (GRLDNVVFRL…KSLEVIANSL (64 aa)) form the S4 RNA-binding domain.

It belongs to the universal ribosomal protein uS4 family. Part of the 30S ribosomal subunit. Contacts protein S5. The interaction surface between S4 and S5 is involved in control of translational fidelity.

Its function is as follows. One of the primary rRNA binding proteins, it binds directly to 16S rRNA where it nucleates assembly of the body of the 30S subunit. In terms of biological role, with S5 and S12 plays an important role in translational accuracy. This chain is Small ribosomal subunit protein uS4, found in Bacteroides thetaiotaomicron (strain ATCC 29148 / DSM 2079 / JCM 5827 / CCUG 10774 / NCTC 10582 / VPI-5482 / E50).